The primary structure comprises 211 residues: Uridine kinase (211 aa).

12 to 19 (GGSGSGKT) contacts ATP.

It belongs to the uridine kinase family.

The protein resides in the cytoplasm. The enzyme catalyses uridine + ATP = UMP + ADP + H(+). The catalysed reaction is cytidine + ATP = CMP + ADP + H(+). It participates in pyrimidine metabolism; CTP biosynthesis via salvage pathway; CTP from cytidine: step 1/3. Its pathway is pyrimidine metabolism; UMP biosynthesis via salvage pathway; UMP from uridine: step 1/1. The chain is Uridine kinase (udk) from Bacillus subtilis (strain 168).